A 145-amino-acid polypeptide reads, in one-letter code: MYLIWIIGGGQKDLTNKILDEIKKLYEQLDEIKDKNINSSNVQLNEFMRQNVNMLKELNQKIDKYLENNNEILKEMEKYVKEDIEHKNRMERKLKQISMLLLIVIIAIGLTISYMVILNNEYLSTQLFNYIQIAIQYLKSLLSNY.

The helical transmembrane segment at isoleucine 97 to isoleucine 117 threads the bilayer.

The protein localises to the membrane. This is an uncharacterized protein from Methanocaldococcus jannaschii (strain ATCC 43067 / DSM 2661 / JAL-1 / JCM 10045 / NBRC 100440) (Methanococcus jannaschii).